Here is an 827-residue protein sequence, read N- to C-terminus: Beta-galactosidase 2 (827 aa).

The N-terminal stretch at 1–24 is a signal peptide; that stretch reads MAASAVAVAFVVAVAAVLAAAASA. E182 acts as the Proton donor in catalysis. N-linked (GlcNAc...) asparagine glycosylation occurs at N209. E251 serves as the catalytic Nucleophile. N458 carries N-linked (GlcNAc...) asparagine glycosylation. Residues 741–827 form the SUEL-type lectin domain; sequence DYEKAKVHLQ…KRAVVEAICG (87 aa).

It belongs to the glycosyl hydrolase 35 family.

It localises to the secreted. It is found in the extracellular space. Its subcellular location is the apoplast. The enzyme catalyses Hydrolysis of terminal non-reducing beta-D-galactose residues in beta-D-galactosides.. This chain is Beta-galactosidase 2, found in Oryza sativa subsp. japonica (Rice).